We begin with the raw amino-acid sequence, 744 residues long: Adenosylcobalamin-dependent ribonucleoside-triphosphate reductase (744 aa).

Cysteines 120 and 424 form a disulfide. The tract at residues 148 to 159 (SMPFSFLFDQLM) is effector region-1. The segment at 169-318 (VDDNINQIPQ…ICNLIGKTVV (150 aa)) is effector region-2. Residues Cys413 and Glu415 contribute to the active site. An adenosylcobalamin-binding-1 region spans residues 570 to 631 (FHYAGYLIQR…SKNFASAGTV (62 aa)). The tract at residues 690–729 (LKQAPKEPINKKAYEDRVAMITGDVKEVFENQNKDQKGLE) is adenosylcobalamin-binding-2.

The protein belongs to the class II ribonucleoside-triphosphate reductase family. As to quaternary structure, monomer. It depends on adenosylcob(III)alamin as a cofactor.

The catalysed reaction is a 2'-deoxyribonucleoside 5'-triphosphate + [thioredoxin]-disulfide + H2O = a ribonucleoside 5'-triphosphate + [thioredoxin]-dithiol. Allosterically regulated by ATP and dNTP. The chain is Adenosylcobalamin-dependent ribonucleoside-triphosphate reductase (rtpR) from Lactobacillus helveticus (strain DPC 4571).